Consider the following 244-residue polypeptide: Flavin-dependent thymidylate synthase (244 aa).

Residues 2 to 207 (VRVTLVNYTR…ELRPIIKWAK (206 aa)) form the ThyX domain. FAD is bound by residues Ser56, 80–82 (RHR), and Gln88. DUMP contacts are provided by residues 77-80 (QLVR), 88-92 (QQSQR), and Arg146. Residues 80–90 (RHRIASYTQQS) carry the ThyX motif motif. Residues 162–164 (NLR) and His168 contribute to the FAD site. A dUMP-binding site is contributed by Arg173. Arg173 (involved in ionization of N3 of dUMP, leading to its activation) is an active-site residue.

This sequence belongs to the thymidylate synthase ThyX family. In terms of assembly, homotetramer. Requires FAD as cofactor.

The enzyme catalyses dUMP + (6R)-5,10-methylene-5,6,7,8-tetrahydrofolate + NADPH + H(+) = dTMP + (6S)-5,6,7,8-tetrahydrofolate + NADP(+). The protein operates within pyrimidine metabolism; dTTP biosynthesis. Functionally, catalyzes the reductive methylation of 2'-deoxyuridine-5'-monophosphate (dUMP) to 2'-deoxythymidine-5'-monophosphate (dTMP) while utilizing 5,10-methylenetetrahydrofolate (mTHF) as the methyl donor, and NADPH and FADH(2) as the reductant. The chain is Flavin-dependent thymidylate synthase from Pyrococcus abyssi (strain GE5 / Orsay).